The following is a 336-amino-acid chain: Flap endonuclease 1 (336 aa).

The N-domain stretch occupies residues 1-98 (MGVDLGDILS…GTLAARAQMK (98 aa)). D27, D80, E150, E152, D171, D173, and D234 together coordinate Mg(2+). Residues 114 to 255 (DSFRYAQATA…RALKLIREHG (142 aa)) form an I-domain region. Residues 328-336 (GQSTLERWL) are interaction with PCNA.

The protein belongs to the XPG/RAD2 endonuclease family. FEN1 subfamily. As to quaternary structure, interacts with PCNA. PCNA stimulates the nuclease activity without altering cleavage specificity. The cofactor is Mg(2+).

Functionally, structure-specific nuclease with 5'-flap endonuclease and 5'-3' exonuclease activities involved in DNA replication and repair. During DNA replication, cleaves the 5'-overhanging flap structure that is generated by displacement synthesis when DNA polymerase encounters the 5'-end of a downstream Okazaki fragment. Binds the unpaired 3'-DNA end and kinks the DNA to facilitate 5' cleavage specificity. Cleaves one nucleotide into the double-stranded DNA from the junction in flap DNA, leaving a nick for ligation. Also involved in the base excision repair (BER) pathway. Acts as a genome stabilization factor that prevents flaps from equilibrating into structures that lead to duplications and deletions. Also possesses 5'-3' exonuclease activity on nicked or gapped double-stranded DNA. The chain is Flap endonuclease 1 from Methanothrix thermoacetophila (strain DSM 6194 / JCM 14653 / NBRC 101360 / PT) (Methanosaeta thermophila).